The chain runs to 585 residues: Arginine--tRNA ligase (585 aa).

The 'HIGH' region signature appears at 131-141; it reads ANPTGPMHVGH.

It belongs to the class-I aminoacyl-tRNA synthetase family. As to quaternary structure, monomer.

It localises to the cytoplasm. The catalysed reaction is tRNA(Arg) + L-arginine + ATP = L-arginyl-tRNA(Arg) + AMP + diphosphate. The sequence is that of Arginine--tRNA ligase from Brucella abortus (strain S19).